A 417-amino-acid chain; its full sequence is Glutamyl-tRNA reductase (417 aa).

Substrate contacts are provided by residues threonine 49–arginine 52, serine 105, glutamate 110–glutamine 112, and glutamine 116. The Nucleophile role is filled by cysteine 50. NADP(+) is bound at residue glycine 185–isoleucine 190.

Belongs to the glutamyl-tRNA reductase family. Homodimer.

The catalysed reaction is (S)-4-amino-5-oxopentanoate + tRNA(Glu) + NADP(+) = L-glutamyl-tRNA(Glu) + NADPH + H(+). It functions in the pathway porphyrin-containing compound metabolism; protoporphyrin-IX biosynthesis; 5-aminolevulinate from L-glutamyl-tRNA(Glu): step 1/2. Catalyzes the NADPH-dependent reduction of glutamyl-tRNA(Glu) to glutamate 1-semialdehyde (GSA). This chain is Glutamyl-tRNA reductase, found in Azoarcus sp. (strain BH72).